The chain runs to 2336 residues: Voltage-dependent N-type calcium channel subunit alpha-1B (2336 aa).

The interval methionine 1–leucine 37 is disordered. The Cytoplasmic segment spans residues methionine 1 to arginine 90. Gly residues predominate over residues glycine 10 to leucine 37. Arginine 22 carries the post-translational modification Omega-N-methylarginine. One copy of the I repeat lies at asparagine 82 to phenylalanine 359. The helical transmembrane segment at isoleucine 91 to leucine 114 threads the bilayer. At glutamate 115 to aspartate 131 the chain is on the extracellular side. The helical transmembrane segment at aspartate 132 to leucine 152 threads the bilayer. The Cytoplasmic portion of the chain corresponds to glycine 153–arginine 163. The helical transmembrane segment at asparagine 164 to alanine 182 threads the bilayer. Topologically, residues glycine 183–aspartate 187 are extracellular. A helical membrane pass occupies residues leucine 188–valine 211. Residues valine 212–valine 221 lie on the Cytoplasmic side of the membrane. The chain crosses the membrane as a helical span at residues proline 222–phenylalanine 244. The Extracellular portion of the chain corresponds to tyrosine 245–tryptophan 331. Asparagine 256 carries an N-linked (GlcNAc...) asparagine glycan. The chain crosses the membrane as a helical span at residues asparagine 332 to serine 356. Over glycine 357 to glutamine 483 the chain is Cytoplasmic. Positions glutamine 379–glutamate 396 are binding to the beta subunit. At serine 411 the chain carries Phosphoserine. Residue alanine 452–threonine 459 coordinates ATP. An II repeat occupies glutamate 469 to leucine 713. The chain crosses the membrane as a helical span at residues serine 484–methionine 502. The Extracellular portion of the chain corresponds to valine 503 to threonine 512. The helical transmembrane segment at threonine 513 to tyrosine 535 threads the bilayer. Residues glycine 536 to serine 545 are Cytoplasmic-facing. Serine 545 contributes to the a 1,2-diacyl-sn-glycero-3-phospho-(1D-myo-inositol-4,5-bisphosphate) binding site. The chain crosses the membrane as a helical span at residues serine 546–isoleucine 567. Residues lysine 568–glycine 574 are Extracellular-facing. Residues isoleucine 575–phenylalanine 587 traverse the membrane as a helical segment. Arginine 585 and lysine 588 together coordinate a 1,2-diacyl-sn-glycero-3-phospho-(1D-myo-inositol-4,5-bisphosphate). Residues lysine 588–asparagine 605 lie on the Cytoplasmic side of the membrane. A helical transmembrane segment spans residues serine 606–leucine 631. Over phenylalanine 632–glycine 683 the chain is Extracellular. Residues methionine 684 to valine 710 form a helical membrane-spanning segment. Topologically, residues aspartate 711–tyrosine 1149 are cytoplasmic. Phosphoserine is present on residues serine 746, serine 749, and serine 784. 2 disordered regions span residues tyrosine 800–lysine 1021 and glutamate 1051–valine 1076. Basic and acidic residues-rich tracts occupy residues valine 806–leucine 827, glutamate 870–alanine 891, glycine 920–proline 930, histidine 938–glutamate 948, glycine 970–threonine 981, and proline 996–lysine 1021. Polar residues predominate over residues glutamine 1059–valine 1076. Serine 1067 carries the phosphoserine modification. An III repeat occupies asparagine 1135–phenylalanine 1421. A helical membrane pass occupies residues phenylalanine 1150–glutamate 1168. Residues aspartate 1169–phenylalanine 1176 lie on the Extracellular side of the membrane. Residues arginine 1177 to isoleucine 1201 form a helical membrane-spanning segment. Residues aspartate 1202–aspartate 1215 are Cytoplasmic-facing. The helical transmembrane segment at leucine 1216 to glycine 1240 threads the bilayer. At serine 1241–isoleucine 1246 the chain is on the extracellular side. Residues asparagine 1247–leucine 1267 form a helical membrane-spanning segment. The Cytoplasmic portion of the chain corresponds to proline 1268–leucine 1285. A helical transmembrane segment spans residues asparagine 1286–leucine 1305. The Extracellular segment spans residues phenylalanine 1306 to methionine 1392. Residues glutamate 1393–isoleucine 1418 form a helical membrane-spanning segment. Residues isoleucine 1419–proline 1473 are Cytoplasmic-facing. The IV repeat unit spans residues asparagine 1458 to phenylalanine 1711. A helical membrane pass occupies residues proline 1474–methionine 1492. Residues lysine 1493–glutamate 1500 lie on the Extracellular side of the membrane. A helical membrane pass occupies residues tyrosine 1501–isoleucine 1525. Residues alanine 1526–aspartate 1535 lie on the Cytoplasmic side of the membrane. The helical transmembrane segment at alanine 1536–isoleucine 1557 threads the bilayer. The Extracellular segment spans residues alanine 1558–asparagine 1563. An N-linked (GlcNAc...) asparagine glycan is attached at asparagine 1563. Residues leucine 1564 to glycine 1582 traverse the membrane as a helical segment. Residues tyrosine 1583–tyrosine 1601 lie on the Cytoplasmic side of the membrane. A helical membrane pass occupies residues valine 1602–phenylalanine 1621. Over glycine 1622–phenylalanine 1683 the chain is Extracellular. An N-linked (GlcNAc...) asparagine glycan is attached at asparagine 1675. Residues alanine 1684–isoleucine 1707 traverse the membrane as a helical segment. Topologically, residues methionine 1708–cysteine 2336 are cytoplasmic. The 36-residue stretch at histidine 1724–proline 1759 folds into the EF-hand domain. The Ca(2+) site is built by aspartate 1737, arginine 1743, and aspartate 1748. A disordered region spans residues threonine 1981–threonine 2202. The segment covering serine 2048–lysine 2062 has biased composition (basic residues). The residue at position 2065 (serine 2065) is a Phosphoserine. Positions cysteine 2097–glutamine 2113 are enriched in basic and acidic residues. Over residues glycine 2161–serine 2177 the composition is skewed to polar residues. Phosphoserine is present on residues serine 2221, serine 2230, and serine 2253.

The protein belongs to the calcium channel alpha-1 subunit (TC 1.A.1.11) family. CACNA1B subfamily. Multisubunit complex consisting of alpha-1, alpha-2, beta and delta subunits in a 1:1:1:1 ratio. The channel activity is directed by the pore-forming and voltage-sensitive alpha-1 subunit. In many cases, this subunit is sufficient to generate voltage-sensitive calcium channel activity. The auxiliary subunits beta and alpha-2/delta linked by a disulfide bridge regulate the channel activity. Interacts with RIMS1. Interacts with FMR1 (via C-terminus); this interaction induces a decrease in the number of presynaptic functional CACNA1B channels at the cell surface. In terms of processing, phosphorylated in vitro by CaM-kinase II, PKA, PKC and CGPK. Central nervous system.

Its subcellular location is the membrane. The enzyme catalyses Ca(2+)(in) = Ca(2+)(out). Its activity is regulated as follows. Is specifically blocked by omega-conotoxin GVIA. Is specifically blocked by omega-conotoxin MVIIA (ziconotide). Is insensitive to dihydropyridines (DHP). In terms of biological role, voltage-sensitive calcium channels (VSCC) mediate the entry of calcium ions into excitable cells and are also involved in a variety of calcium-dependent processes, including muscle contraction, hormone or neurotransmitter release, gene expression, cell motility, cell division and cell death. This alpha-1B subunit gives rise to N-type calcium currents. N-type calcium channels belong to the 'high-voltage activated' (HVA) group. They are involved in pain signaling. Calcium channels containing alpha-1B subunit may play a role in directed migration of immature neurons. Mediates Ca(2+) release probability at hippocampal neuronal soma and synaptic terminals. The protein is Voltage-dependent N-type calcium channel subunit alpha-1B (Cacna1b) of Rattus norvegicus (Rat).